Consider the following 103-residue polypeptide: Somatostatin-2 (103 aa).

The N-terminal stretch at 1-21 (MLGSAGTLLLLLLAWGARALS) is a signal peptide. A propeptide spanning residues 22–87 (QPDDNRITTG…VKFPRLSLRE (66 aa)) is cleaved from the precursor. A disulfide bond links cysteine 92 and cysteine 103.

Belongs to the somatostatin family.

It is found in the secreted. In terms of biological role, somatostatin inhibits the release of somatotropin. The polypeptide is Somatostatin-2 (sst2) (Pelophylax ridibundus (Marsh frog)).